We begin with the raw amino-acid sequence, 149 residues long: Ribonuclease pancreatic (149 aa).

Positions 1-25 (MGLEKSLMLFPLFVLLLGWVQPSLG) are cleaved as a signal peptide. Positions 30-49 (AQKFQRQHMDPAGSSSNSPT) are disordered. Residues Lys-32 and Arg-35 each coordinate substrate. The Proton acceptor role is filled by His-37. 4 cysteine pairs are disulfide-bonded: Cys-51/Cys-109, Cys-65/Cys-120, Cys-83/Cys-135, and Cys-90/Cys-97. Residue 66–70 (KPVNT) coordinates substrate. The N-linked (GlcNAc...) asparagine glycan is linked to Asn-87. Lys-91 contributes to the substrate binding site. His-144 functions as the Proton donor in the catalytic mechanism.

It belongs to the pancreatic ribonuclease family. As to quaternary structure, monomer. Interacts with and forms tight 1:1 complexes with RNH1. Dimerization of two such complexes may occur. Interaction with RNH1 inhibits this protein. As to expression, pancreas.

The protein resides in the secreted. The catalysed reaction is an [RNA] containing cytidine + H2O = an [RNA]-3'-cytidine-3'-phosphate + a 5'-hydroxy-ribonucleotide-3'-[RNA].. The enzyme catalyses an [RNA] containing uridine + H2O = an [RNA]-3'-uridine-3'-phosphate + a 5'-hydroxy-ribonucleotide-3'-[RNA].. In terms of biological role, endonuclease that catalyzes the cleavage of RNA on the 3' side of pyrimidine nucleotides. Acts on single-stranded and double-stranded RNA. The polypeptide is Ribonuclease pancreatic (Rnase1) (Mus saxicola (Brown spiny mouse)).